The sequence spans 366 residues: Flagellar P-ring protein (366 aa).

The first 20 residues, 1–20 (MVIKFLSALILLLVTTAAQA), serve as a signal peptide directing secretion.

This sequence belongs to the FlgI family. As to quaternary structure, the basal body constitutes a major portion of the flagellar organelle and consists of four rings (L,P,S, and M) mounted on a central rod.

Its subcellular location is the periplasm. It localises to the bacterial flagellum basal body. Assembles around the rod to form the L-ring and probably protects the motor/basal body from shearing forces during rotation. The chain is Flagellar P-ring protein from Escherichia coli (strain UTI89 / UPEC).